A 136-amino-acid chain; its full sequence is Galectin-7 (136 aa).

In terms of domain architecture, Galectin spans 6-136; that stretch reads HKTPLPQGVR…DVQLHSVKIF (131 aa). 70–76 provides a ligand contact to a beta-D-galactoside; that stretch reads WGREERG.

Monomer.

It localises to the cytoplasm. It is found in the nucleus. The protein resides in the secreted. Its function is as follows. Could be involved in cell-cell and/or cell-matrix interactions necessary for normal growth control. Pro-apoptotic protein that functions intracellularly upstream of JNK activation and cytochrome c release. This Rattus norvegicus (Rat) protein is Galectin-7 (Lgals7).